The chain runs to 165 residues: uncharacterized protein (165 aa).

The region spanning 1 to 165 (MDIKVVKGSI…EAWEKVLGLR (165 aa)) is the Macro domain.

This is an uncharacterized protein from Aquifex aeolicus (strain VF5).